A 151-amino-acid polypeptide reads, in one-letter code: Small ribosomal subunit protein bS6 (151 aa).

Residues 97–151 (EAEPSAMMQKRDRDDRKDRDRGDRPRRRDDDFGGGDRGDRGDRGDRPERNFGGEN) are disordered. A compositionally biased stretch (basic and acidic residues) spans 105–151 (QKRDRDDRKDRDRGDRPRRRDDDFGGGDRGDRGDRGDRPERNFGGEN).

This sequence belongs to the bacterial ribosomal protein bS6 family.

In terms of biological role, binds together with bS18 to 16S ribosomal RNA. This Methylorubrum extorquens (strain CM4 / NCIMB 13688) (Methylobacterium extorquens) protein is Small ribosomal subunit protein bS6.